We begin with the raw amino-acid sequence, 566 residues long: Phenylalanine--tRNA ligase beta subunit (566 aa).

Residues 287–362 (YFQEEVEFNV…IGEGLSSFNP (76 aa)) form the B5 domain. Residues Asp340, Asp346, Glu349, and Asp350 each contribute to the Mg(2+) site.

Belongs to the phenylalanyl-tRNA synthetase beta subunit family. Type 2 subfamily. In terms of assembly, tetramer of two alpha and two beta subunits. Mg(2+) is required as a cofactor.

The protein resides in the cytoplasm. The enzyme catalyses tRNA(Phe) + L-phenylalanine + ATP = L-phenylalanyl-tRNA(Phe) + AMP + diphosphate + H(+). This chain is Phenylalanine--tRNA ligase beta subunit, found in Borreliella burgdorferi (strain ATCC 35210 / DSM 4680 / CIP 102532 / B31) (Borrelia burgdorferi).